The sequence spans 2715 residues: Cilia- and flagella-associated protein 46 (2715 aa).

TPR repeat units follow at residues 89-122 (CRAQ…AKGE), 175-208 (AELM…IKSH), 261-295 (GDIS…LLFE), 324-359 (PGKL…AQLD), 426-459 (CQVH…DSLG), 469-503 (STRL…TPKD), 807-845 (SRKF…TNGS), 936-969 (LQTL…GIKY), 1111-1144 (AALY…LPRT), and 1174-1211 (AESE…LQKP). Positions 1356–1412 (SHLLLPKKEKENERSKEKEKERSKEKENERSKEKDKEKGKEEKVKEPKQSQSPAPIK) are disordered. The segment covering 1361–1403 (PKKEKENERSKEKEKERSKEKENERSKEKDKEKGKEEKVKEPK) has biased composition (basic and acidic residues). Residues 1362-1401 (KKEKENERSKEKEKERSKEKENERSKEKDKEKGKEEKVKE) adopt a coiled-coil conformation. The stretch at 1639–1672 (AQCLLLLAQLANKEKNYGQAKKMIAQAQHLGGSE) is one TPR 11 repeat. Positions 1781 to 1810 (VDVKLERAKIKRLRAQNEKDEEQKTAYYLE) form a coiled coil. 3 disordered regions span residues 2000–2023 (EEEG…EHCR), 2294–2319 (AVVA…HSTV), and 2371–2399 (ETEG…KGSI). Basic and acidic residues-rich tracts occupy residues 2300–2311 (GKSKGKDKERKT) and 2371–2383 (ETEG…GRSR). Over residues 2384–2398 (DPKKRSLAKKGRKGS) the composition is skewed to basic residues. TPR repeat units lie at residues 2399-2432 (IPRT…EMLT) and 2504-2537 (VAVL…EANW). The tract at residues 2541 to 2567 (ASPSEDEWRRGGEPRRGFSDLEGQAAA) is disordered. Basic and acidic residues predominate over residues 2546 to 2559 (DEWRRGGEPRRGFS).

Belongs to the CFAP46 family.

It is found in the cytoplasm. Its subcellular location is the cytoskeleton. It localises to the cilium axoneme. As part of the central apparatus of the cilium axoneme plays a role in cilium movement. This chain is Cilia- and flagella-associated protein 46, found in Homo sapiens (Human).